A 270-amino-acid polypeptide reads, in one-letter code: Interleukin-33 (270 aa).

Residues 1 to 65 form a homeodomain-like HTH domain region; the sequence is MKPKMKYSTN…EACYFRRETT (65 aa). The propeptide occupies 1–94; that stretch reads MKPKMKYSTN…CQQQSTVESF (94 aa). The interval 64-111 is interaction with RELA; the sequence is TTKRPSLKTDRKHKRHLVLAACQQQSTVESFAFGISGVQKYTRALHDS.

Belongs to the IL-1 family. Highly divergent. Forms a 1:1:1 heterotrimeric complex with its primary high-affinity receptor IL1RL1 and the coreceptor IL1RAP. Interacts with cargo receptor TMED10; the interaction mediates the translocation from the cytoplasm into the ERGIC (endoplasmic reticulum-Golgi intermediate compartment) and thereby secretion. Post-translationally, the full-length protein can be released from cells and is able to signal via the IL1RL1/ST2 receptor. However, proteolytic processing by CELA1, CSTG/cathepsin G and ELANE/neutrophil elastase produces C-terminal peptides that are more active than the unprocessed full-length protein. May also be proteolytically processed by calpains. Proteolytic cleavage mediated by apoptotic caspases including CASP3 and CASP7 results in IL33 inactivation. In vitro proteolytic cleavage by CASP1 was reported but could not be confirmed in vivo suggesting that IL33 is probably not a direct substrate for that caspase.

It is found in the nucleus. It localises to the chromosome. The protein localises to the cytoplasm. Its subcellular location is the cytoplasmic vesicle. The protein resides in the secretory vesicle. It is found in the secreted. Its function is as follows. Cytokine that binds to and signals through the IL1RL1/ST2 receptor which in turn activates NF-kappa-B and MAPK signaling pathways in target cells. Involved in the maturation of Th2 cells inducing the secretion of T-helper type 2-associated cytokines. Also involved in activation of mast cells, basophils, eosinophils and natural killer cells. Acts as a chemoattractant for Th2 cells, and may function as an 'alarmin', that amplifies immune responses during tissue injury. Induces rapid UCP2-dependent mitochondrial rewiring that attenuates the generation of reactive oxygen species and preserves the integrity of Krebs cycle required for persistent production of itaconate and subsequent GATA3-dependent differentiation of inflammation-resolving alternatively activated macrophages. In terms of biological role, in quiescent endothelia the uncleaved form is constitutively and abundantly expressed, and acts as a chromatin-associated nuclear factor with transcriptional repressor properties, it may sequester nuclear NF-kappaB/RELA, lowering expression of its targets. This form is rapidely lost upon angiogenic or pro-inflammatory activation. The polypeptide is Interleukin-33 (IL33) (Pongo abelii (Sumatran orangutan)).